The sequence spans 146 residues: Large ribosomal subunit protein uL15 (146 aa).

Positions 1–54 (MTLRLNELAPAEGAKREHRRLGRGIGSGVGKTGGRGIKGQKSRKSGGVRPGFEG) are disordered. Residues 23 to 37 (RGIGSGVGKTGGRGI) are compositionally biased toward gly residues.

The protein belongs to the universal ribosomal protein uL15 family. In terms of assembly, part of the 50S ribosomal subunit.

In terms of biological role, binds to the 23S rRNA. The chain is Large ribosomal subunit protein uL15 from Acinetobacter baumannii (strain SDF).